Consider the following 117-residue polypeptide: Anti-sigma F factor antagonist (117 aa).

Residues 3-113 (LGIDMNVKES…QSEQQALLTL (111 aa)) form the STAS domain. The residue at position 58 (serine 58) is a Phosphoserine.

It belongs to the anti-sigma-factor antagonist family. Post-translationally, phosphorylated by SpoIIAB on a serine residue.

In terms of biological role, in the phosphorylated form it could act as an anti-anti-sigma factor that counteracts SpoIIAB and thus releases sigma f from inhibition. The polypeptide is Anti-sigma F factor antagonist (spoIIAA) (Bacillus subtilis (strain 168)).